Here is a 146-residue protein sequence, read N- to C-terminus: Ecotin-like protein 1 (146 aa).

It belongs to the protease inhibitor I11 (ecotin) family.

The chain is Ecotin-like protein 1 (ISP1) from Leishmania braziliensis.